We begin with the raw amino-acid sequence, 599 residues long: MDEQVFKGDPDTPHSISFSGSGFLSYYQAGAVDALRDLAPRMLDTAHRFAGTSAGAVIAALVVCGIEMEKYLRVLNMGLAEVKKFFLGPLSPSCKMVQMMRQFLYDVLPEDSYKFATGKLHVSLTRVTDGENVVVSEYRSKEELIEALYCSCFVPVYCGFIPPTYRGERYIDGGFTSMQPCSFWTDSITISTFSSQQDICPRDCPTIFHDFRMFNFSFQFSLENITRMTHALFPPDLVILQEYYYRGYNDAVSYLRRLNAAYLDSPSKRVIFPRVEVYCQIEVALGHEPPPPSLQNLPALRRSPADSSQTHAQGSPKKDRKDSHSSAAPSVQTPESGCKESVESPVSLRVSISKQPSVSPLSPAQPVPVMRPTGPRDSCPINVQTPNPERGVKGALDSATERGMKDALASATDEQSTTTLPPVLLPAADSRGSKTGSSVPIGSPESPRLLLRSSQGATASRATLGLPPLSPSTPPAGPPVEDLGPERPTATGSPALSQLTGSAAPGTGKKAPHKPLLVEGPGEDSNTAKTMFKRKQKTNATRECFHRNAQSKKPASKLKSAPCPLNFPVLPKRVWVTYKPHPSRIQDYSYPEGVSGQNS.

The 170-residue stretch at 16–185 folds into the PNPLA domain; it reads ISFSGSGFLS…TSMQPCSFWT (170 aa). A GXSXG motif is present at residues 51-55; the sequence is GTSAG. Catalysis depends on S53, which acts as the Nucleophile. Residue D172 is the Proton acceptor of the active site. A DGA/G motif is present at residues 172-174; it reads DGG. Residues 289–563 form a disordered region; sequence PPPPSLQNLP…PASKLKSAPC (275 aa). Composition is skewed to polar residues over residues 325 to 335 and 350 to 362; these read SSAAPSVQTPE and VSIS…SPLS. Residues 443-454 are compositionally biased toward low complexity; the sequence is SPESPRLLLRSS. Residues 468-478 show a composition bias toward pro residues; the sequence is PLSPSTPPAGP. Residues 490–501 are compositionally biased toward polar residues; it reads ATGSPALSQLTG. Low complexity predominate over residues 551 to 563; sequence SKKPASKLKSAPC.

As to expression, specifically expressed in skin by keratinocytes, at the boundary area between the nucleated stratum granulosum and the denucleated stratum corneum in the epidermis (at protein level). Also expressed in stomach and other surface lining tissues like intestine and tongue. Also detected in testis as well as in other tissues but at very low level.

It localises to the cytoplasm. The enzyme catalyses an N-(omega-hydroxy-ultra-long chain fatty acyl)-sphingoid base + a (9Z,12Z)-octadecadienoyl-containing triacyl-sn-glycerol = an N-[omega-(9Z,12Z-octadecadienoyloxy)-O-ultra-long chain fatty acyl]-sphingoid base + a diacylglycerol. It carries out the reaction an N-(omega-hydroxy-ultra-long chain fatty acyl)-sphing-4-enine + a (9Z,12Z)-octadecadienoyl-containing triacyl-sn-glycerol = an N-(omega-(9Z,12Z-octadecadienoyloxy)-ultra-long chain fatty acyl)-sphing-4-enine + a diacylglycerol. It catalyses the reaction N-(28-hydroxyoctacosanoyl)-sphing-4-enine + a (9Z,12Z)-octadecadienoyl-containing triacyl-sn-glycerol = N-(28-(9Z,12Z-octadecadienoyloxy)-octacosanoyl)-sphing-4-enine + a diacylglycerol. The catalysed reaction is N-(30-hydroxytriacontanoyl)-sphing-4-enine + 1,2,3-tri-(9Z,12Z)-octadecadienoylglycerol = N-[30-(9Z,12Z-octadecadienoyloxy)-triacontanoyl]-sphing-4-enine + di-(9Z,12Z)-octadecadienoylglycerol. The enzyme catalyses N-(32-hydroxydotriacontanoyl)-sphing-4-enine + a (9Z,12Z)-octadecadienoyl-containing triacyl-sn-glycerol = N-(32-(9Z,12Z-octadecadienoyloxy)-dotricontanoyl)-sphing-4-enine + a diacylglycerol. It carries out the reaction N-(32-hydroxydotriacontenoyl)-sphing-4-enine + a (9Z,12Z)-octadecadienoyl-containing triacyl-sn-glycerol = an N-(32-(9Z,12Z-octadecadienoyloxy)-dotriacontenoyl)-sphing-4-enine + a diacylglycerol. It catalyses the reaction an N-(34-hydroxytetratriacontenoyl)-sphing-4-enine + a (9Z,12Z)-octadecadienoyl-containing triacyl-sn-glycerol = an N-(34-(9Z,12Z-octadecadienoyloxy)-tetratriacontenoyl)-sphing-4-enine + a diacylglycerol. The catalysed reaction is an N-(34-hydroxytetratriacontadienoyl)-sphing-4-enine + a (9Z,12Z)-octadecadienoyl-containing triacyl-sn-glycerol = an N-(34-(9Z,12Z-octadecadienoyloxy)-tetratriacontadienoyl)-sphing-4-enine + a diacylglycerol. The enzyme catalyses an N-(36-hydroxyhexatriacontenoyl)-sphing-4-enine + a (9Z,12Z)-octadecadienoyl-containing triacyl-sn-glycerol = an N-(36-(9Z,12Z-octadecadienoyloxy)-hexatriacontenoyl)-sphing-4-enine + a diacylglycerol. It carries out the reaction an N-(36-hydroxyhexatriacontadienoyl)-sphing-4-enine + a (9Z,12Z)-octadecadienoyl-containing triacyl-sn-glycerol = an N-(36-(9Z,12Z-octadecadienoyloxy)-hexatriacontadienoyl)-sphing-4-enine + a diacylglycerol. It catalyses the reaction an N-(38-hydroxyoctatriacontenoyl)-sphing-4-enine + a (9Z,12Z)-octadecadienoyl-containing triacyl-sn-glycerol = an N-(38-(9Z,12Z-octadecadienoyloxy)-octatriacontenoyl)-sphing-4-enine + a diacylglycerol. Its function is as follows. Omega-hydroxyceramide transacylase involved in the synthesis of omega-O-acylceramides (esterified omega-hydroxyacyl-sphingosine; EOS), which are extremely hydrophobic lipids involved in skin barrier formation. Catalyzes the last step of the synthesis of omega-O-acylceramides by transferring linoleic acid from triglycerides to an omega-hydroxyceramide. Omega-O-acylceramides, are required for the biogenesis of lipid lamellae in the stratum corneum and the formation of the cornified lipid envelope which are essential for the epidermis barrier function. These lipids also play a role in keratinocyte differentiation. May also act on omega-hydroxylated ultra-long chain fatty acids (omega-OH ULCFA) and acylglucosylceramides (GlcEOS). This is Omega-hydroxyceramide transacylase from Mus musculus (Mouse).